The following is a 368-amino-acid chain: MTLTRPLALISALAALILALPADAERIKDLTTIQGVRSNQLIGYGLVVGLDGTGDQTTQTPFTVQSIVSMMQQMGINLPSGTNLQLRNVAAVMVTGNLPPFAQPGQPMDVTVSSMGNARSLRGGTLLMTPLKGADNQVYAMAQGNLVIGGAGAGASGTSTQINHLGAGRISAGAIVERAVPSQLTETSTIRLELKEADFSTASMVVDAINKRFGNGTATPLDGRVIQVQPPMDINRIAFIGNLENLDVKPSQGPAKVILNARTGSVVMNQAVTLDDCAISHGNLSVVINTAPAISQPGPFSGGQTVATQVSQVEINKEPGQVIKLDKGTSLADVVKALNAIGATPQDLVAILQAMKAAGSLRADLEII.

The N-terminal stretch at M1–A24 is a signal peptide.

The protein belongs to the FlgI family. As to quaternary structure, the basal body constitutes a major portion of the flagellar organelle and consists of four rings (L,P,S, and M) mounted on a central rod.

The protein localises to the periplasm. Its subcellular location is the bacterial flagellum basal body. Its function is as follows. Assembles around the rod to form the L-ring and probably protects the motor/basal body from shearing forces during rotation. In Methylobacillus flagellatus (strain ATCC 51484 / DSM 6875 / VKM B-1610 / KT), this protein is Flagellar P-ring protein.